We begin with the raw amino-acid sequence, 776 residues long: DExH-box ATP-dependent RNA helicase DExH18, mitochondrial (776 aa).

The N-terminal 84 residues, 1 to 84 (MARGVAGVLR…RSFSSTVDNN (84 aa)), are a transit peptide targeting the mitochondrion. Residues 80–101 (TVDNNGENDDIEESVGSESDDY) are disordered. The span at 85–101 (GENDDIEESVGSESDDY) shows a compositional bias: acidic residues. Positions 268-426 (FARAMKRKIV…RFKPLVVEAK (159 aa)) constitute a Helicase ATP-binding domain. ATP is bound at residue 281–288 (GPTNSGKT). The DEIH box; degenerate signature appears at 361 to 364 (DEIQ). A Helicase C-terminal domain is found at 427–595 (TLLGELKNVK…LFAAQVPDMA (169 aa)).

This sequence belongs to the DExH box helicase family. Homodimer; in free form. Component of the mitochondrial degradosome (mtEXO) complex which is a heteropentamer containing 2 copies of SUPV3L1 and 3 copies of PNPT1. The cofactor is Mg(2+). Mn(2+) serves as cofactor.

It is found in the nucleus. Its subcellular location is the mitochondrion matrix. It localises to the mitochondrion nucleoid. The enzyme catalyses ATP + H2O = ADP + phosphate + H(+). Functionally, major helicase player in mitochondrial RNA metabolism. Component of the mitochondrial degradosome (mtEXO) complex, that degrades 3' overhang double-stranded RNA with a 3'-to-5' directionality in an ATP-dependent manner. ATPase and ATP-dependent multisubstrate helicase, able to unwind double-stranded (ds) DNA and RNA, and RNA/DNA heteroduplexes in the 5'-to-3' direction. Plays a role in the RNA surveillance system in mitochondria; regulates the stability of mature mRNAs, the removal of aberrantly formed mRNAs and the rapid degradation of non coding processing intermediates. This chain is DExH-box ATP-dependent RNA helicase DExH18, mitochondrial, found in Arabidopsis thaliana (Mouse-ear cress).